Here is a 492-residue protein sequence, read N- to C-terminus: MLRKLVCGLEIHTQLKTGQKLFSLSSTEASKPNTNISFFDIGLPGSQPTLNQACLLTALKACVSLNSNINSVSTFDRKHYFYPDQPNGYQITQYYRPISSGGFLKLSKRFDEIDEDEKLVRIHHIQIEQDTGKSLYKDLSDKSLVDYNRSNMPLIEVVTEPDLNSVKQVKAFLRKYLQLMKTMDVSTGQLEAGAMRVDVNVSVDDGERVEIKNMTSTSAIVNAIRYEFKRQTKSIDKGNPIKTKETRGWDGNKTFRLRDKESSVDYRYMPDPELPPVVLDVNDIVTRIKKMTITTPEEQLAQLMSPPYNIKLRDARILLNDRNLLGYYYALFSRTSAKNIPSKYPINWCCHEFLGYLAKNNIDFSEDLFPVHQLADLIDCIFREQVTNNNAKILFEHLLANPAENEGPIIDLITKYELGEVDVTNDSELLAQVDSIIDDVLDTYPAIVKELQEGNKPGSINYLLGQCMRTSAGRIKSKVFESRLKEKIHIIK.

It belongs to the GatB/GatE family. GatB subfamily. In terms of assembly, subunit of the heterotrimeric GatFAB amidotransferase (AdT) complex, composed of A, B and F subunits.

It is found in the mitochondrion. It catalyses the reaction L-glutamyl-tRNA(Gln) + L-glutamine + ATP + H2O = L-glutaminyl-tRNA(Gln) + L-glutamate + ADP + phosphate + H(+). Allows the formation of correctly charged Gln-tRNA(Gln) through the transamidation of misacylated Glu-tRNA(Gln) in the mitochondria. The reaction takes place in the presence of glutamine and ATP through an activated gamma-phospho-Glu-tRNA(Gln). The protein is Glutamyl-tRNA(Gln) amidotransferase subunit B, mitochondrial of Komagataella phaffii (strain GS115 / ATCC 20864) (Yeast).